A 291-amino-acid chain; its full sequence is UDP-N-acetylenolpyruvoylglucosamine reductase (291 aa).

The FAD-binding PCMH-type domain maps to 22–187; sequence RIGGPARYFK…ASATFQLTKD (166 aa). R166 is an active-site residue. C214 functions as the Proton donor in the catalytic mechanism. E283 is a catalytic residue.

Belongs to the MurB family. The cofactor is FAD.

Its subcellular location is the cytoplasm. It carries out the reaction UDP-N-acetyl-alpha-D-muramate + NADP(+) = UDP-N-acetyl-3-O-(1-carboxyvinyl)-alpha-D-glucosamine + NADPH + H(+). It functions in the pathway cell wall biogenesis; peptidoglycan biosynthesis. Cell wall formation. The chain is UDP-N-acetylenolpyruvoylglucosamine reductase from Chlamydia trachomatis serovar L2 (strain ATCC VR-902B / DSM 19102 / 434/Bu).